The chain runs to 817 residues: tRNA(Met) cytidine acetyltransferase TmcA (817 aa).

ATP contacts are provided by residues Gln-265, Gly-289–Ile-298, and Arg-439. The N-acetyltransferase domain occupies Glu-469 to Ser-664. Acetyl-CoA-binding positions include Ile-589 to Thr-591, Met-596 to Ser-602, Glu-629, and Arg-636.

The protein belongs to the RNA cytidine acetyltransferase family. TmcA subfamily.

It localises to the cytoplasm. The catalysed reaction is cytidine(34) in elongator tRNA(Met) + acetyl-CoA + ATP + H2O = N(4)-acetylcytidine(34) in elongator tRNA(Met) + ADP + phosphate + CoA + H(+). It catalyses the reaction a cytidine in RNA + acetyl-CoA + ATP + H2O = an N(4)-acetylcytidine in RNA + ADP + phosphate + CoA + H(+). It carries out the reaction a cytidine in tRNA + acetyl-CoA + ATP + H2O = an N(4)-acetylcytidine in tRNA + ADP + phosphate + CoA + H(+). The enzyme catalyses a cytidine in mRNA + acetyl-CoA + ATP + H2O = an N(4)-acetylcytidine in mRNA + ADP + phosphate + CoA + H(+). Catalyzes the formation of N(4)-acetylcytidine (ac(4)C) at the wobble position of tRNA(Met), by using acetyl-CoA as an acetyl donor and ATP (or GTP). In terms of biological role, catalyzes the formation of N(4)-acetylcytidine (ac(4)C) sites in rRNA, tRNA, mRNA and non-coding (nc) RNA, almost always on the middle C of a CCG motif. In hyperthermophiles more acetylation is seen at higher temperatures. The protein is tRNA(Met) cytidine acetyltransferase TmcA of Pyrococcus abyssi (strain GE5 / Orsay).